A 421-amino-acid polypeptide reads, in one-letter code: Serine--tRNA ligase (421 aa).

225–227 (TAE) serves as a coordination point for L-serine. Residues 256 to 258 (RSE) and Val-272 contribute to the ATP site. Glu-279 contributes to the L-serine binding site. ATP is bound at residue 345 to 348 (ETHS). L-serine is bound at residue Thr-380.

Belongs to the class-II aminoacyl-tRNA synthetase family. Type-1 seryl-tRNA synthetase subfamily. Homodimer. The tRNA molecule binds across the dimer.

Its subcellular location is the cytoplasm. The catalysed reaction is tRNA(Ser) + L-serine + ATP = L-seryl-tRNA(Ser) + AMP + diphosphate + H(+). It carries out the reaction tRNA(Sec) + L-serine + ATP = L-seryl-tRNA(Sec) + AMP + diphosphate + H(+). It participates in aminoacyl-tRNA biosynthesis; selenocysteinyl-tRNA(Sec) biosynthesis; L-seryl-tRNA(Sec) from L-serine and tRNA(Sec): step 1/1. Catalyzes the attachment of serine to tRNA(Ser). Is also able to aminoacylate tRNA(Sec) with serine, to form the misacylated tRNA L-seryl-tRNA(Sec), which will be further converted into selenocysteinyl-tRNA(Sec). The chain is Serine--tRNA ligase from Thermus thermophilus (strain ATCC 27634 / DSM 579 / HB8).